The following is a 984-amino-acid chain: Serine/threonine-protein kinase Nek9 (984 aa).

An N-acetylserine modification is found at S2. Phosphoserine is present on residues S2, S13, S16, and S20. The disordered stretch occupies residues 14-43; it reads INSDFGSESGGGGDSGPGPSAVPGPRAGGG. Position 52 is a phosphotyrosine (Y52). A Protein kinase domain is found at 52–308; sequence YIPIRVLGRG…ADALLDLPLL (257 aa). 58-66 contributes to the ATP binding site; that stretch reads LGRGAFGEA. S76 bears the Phosphoserine mark. Residue K81 coordinates ATP. Catalysis depends on D176, which acts as the Proton acceptor. Phosphothreonine; by autocatalysis is present on T210. Phosphothreonine is present on T254. The residue at position 331 (S331) is a Phosphoserine. T333 bears the Phosphothreonine mark. 6 RCC1 repeats span residues 388–444, 445–498, 499–550, 551–615, 616–668, and 669–726; these read KELY…VTDE, GQLY…LTRN, KEVY…LTQS, GKVL…IDER, GRLL…ATDD, and NHIF…IVEK. The tract at residues 732 to 896 is interaction with NEK6; it reads TIRSNSSGLS…GKALTSAACA (165 aa). The residue at position 741 (S741) is a Phosphoserine. Residues 744-790 form a disordered region; the sequence is TVVQSSSPGGGIGGGGGGGGGGGGEEEDSQQESETPDPSGGFRGTME. Residues 751–766 are compositionally biased toward gly residues; sequence PGGGIGGGGGGGGGGG. A compositionally biased stretch (acidic residues) spans 767–778; that stretch reads GEEEDSQQESET. S808 and S839 each carry phosphoserine. Residue T891 is modified to Phosphothreonine. Residues 896–945 are a coiled coil; that stretch reads ACSALQVEVDRLQALVLKCLEEQQKLQQENLQMFTQLQKLNKKLEGGQQV. The disordered stretch occupies residues 940-984; sequence EGGQQVGMHSRGTQTAKEEMEMDPKPDLDSESWCLLGTDSCRPSL. S949 bears the Phosphoserine mark. Positions 955–967 are enriched in basic and acidic residues; it reads AKEEMEMDPKPDL. The residue at position 983 (S983) is a Phosphoserine.

Belongs to the protein kinase superfamily. NEK Ser/Thr protein kinase family. NIMA subfamily. As to quaternary structure, homodimer; homodimerization is required to activate NEK7. Binds to Ran GTPase. Has a greater affinity for Ran-GDP over Ran-GTP. Interacts with SSRP1 and SUPT16H, the 2 subunits of the FACT complex. Interacts with DYNLL1; phosphorylation at Ser-949 strongly reduces DYNLL1 binding. Mg(2+) serves as cofactor. Post-translationally, autophosphorylated on serine and threonine residues. When complexed with FACT, exhibits markedly elevated phosphorylation on Thr-210. During mitosis, not phosphorylated on Thr-210. Phosphorylated by CDK1 in vitro.

Its subcellular location is the cytoplasm. It is found in the nucleus. The catalysed reaction is L-seryl-[protein] + ATP = O-phospho-L-seryl-[protein] + ADP + H(+). It catalyses the reaction L-threonyl-[protein] + ATP = O-phospho-L-threonyl-[protein] + ADP + H(+). With respect to regulation, activated during mitosis by intramolecular autophosphorylation. Activity and autophosphorylation is activated by manganese &gt;&gt; magnesium ions. It is not cell-cycle regulated but activity is higher in G0-arrested cells. In terms of biological role, pleiotropic regulator of mitotic progression, participating in the control of spindle dynamics and chromosome separation. Phosphorylates different histones, myelin basic protein, beta-casein, and BICD2. Phosphorylates histone H3 on serine and threonine residues and beta-casein on serine residues. Important for G1/S transition and S phase progression. Phosphorylates NEK6 and NEK7 and stimulates their activity by releasing the autoinhibitory functions of Tyr-108 and Tyr-97 respectively. In Mus musculus (Mouse), this protein is Serine/threonine-protein kinase Nek9.